The chain runs to 191 residues: Orotate phosphoribosyltransferase (191 aa).

114-122 serves as a coordination point for 5-phospho-alpha-D-ribose 1-diphosphate; the sequence is EDVVTTGKS. Orotate contacts are provided by Thr118 and Arg146.

It belongs to the purine/pyrimidine phosphoribosyltransferase family. PyrE subfamily. In terms of assembly, homodimer. Requires Mg(2+) as cofactor.

The catalysed reaction is orotidine 5'-phosphate + diphosphate = orotate + 5-phospho-alpha-D-ribose 1-diphosphate. It functions in the pathway pyrimidine metabolism; UMP biosynthesis via de novo pathway; UMP from orotate: step 1/2. In terms of biological role, catalyzes the transfer of a ribosyl phosphate group from 5-phosphoribose 1-diphosphate to orotate, leading to the formation of orotidine monophosphate (OMP). This is Orotate phosphoribosyltransferase from Clostridium botulinum (strain ATCC 19397 / Type A).